Reading from the N-terminus, the 430-residue chain is Mannosylglucosylglycerate synthase (430 aa).

The protein belongs to the glycosyltransferase group 1 family. A divalent metal cation is required as a cofactor.

The catalysed reaction is (2R)-2-O-(alpha-D-glucopyranosyl)-glycerate + GDP-alpha-D-mannose = (2R)-2-O-[alpha-D-mannopyranosyl-(1-&gt;2)-alpha-D-glucopyranosyl]-glycerate + GDP + H(+). In terms of biological role, involved in the biosynthesis of the compatible solute mannosylglucosylglycerate through a nonphosphorylating pathway. Catalyzes the synthesis of mannosylglucosylglycerate (MGG) from glucosylglycerate (GG) and GDP-mannose. The protein is Mannosylglucosylglycerate synthase of Petrotoga mobilis (strain DSM 10674 / SJ95).